The following is a 412-amino-acid chain: Heme chaperone HemW (412 aa).

The Radical SAM core domain maps to 4–241 (GTYLMPTAAY…RHGQEVLTQA (238 aa)). S-adenosyl-L-methionine is bound at residue Y13. C19, C23, and C26 together coordinate [2Fe-2S] cluster. Residues G72, 73 to 74 (GT), E105, Q132, R144, and D169 each bind S-adenosyl-L-methionine.

The protein belongs to the anaerobic coproporphyrinogen-III oxidase family. HemW subfamily. It depends on [4Fe-4S] cluster as a cofactor.

The protein localises to the cytoplasm. Functionally, probably acts as a heme chaperone, transferring heme to an unknown acceptor. Binds one molecule of heme per monomer, possibly covalently. Binds 1 [2Fe-2S] cluster. Although this protein has sequence motifs typically found in proteins binding the [4Fe-4S]-AdoMet radical-SAM cluster and S-adenosylmethionine, spectroscopic evidence suggests that a [2Fe-2S] cluster is present; S-adenosylmethionine was not detected. Has no detectable coproporphyrinogen-III oxidase activity. The chain is Heme chaperone HemW from Synechocystis sp. (strain ATCC 27184 / PCC 6803 / Kazusa).